The following is a 460-amino-acid chain: NADH-ubiquinone oxidoreductase chain 4 (460 aa).

Helical transmembrane passes span 22 to 42, 59 to 79, 93 to 113, 114 to 134, 148 to 168, 195 to 215, 225 to 245, 258 to 278, 286 to 306, 310 to 330, 351 to 371, 394 to 414, and 440 to 460; these read WLWP…LLWF, IDPL…LMIL, QRIY…AFSA, TELI…LIII, TYFL…LLLM, FWWT…GVHL, PIAG…YGMM, MAYP…SICL, LIAY…MIQT, FAGA…LFCL, VMLP…LALP, ILLT…MFLM, and LHLI…GWTF.

Belongs to the complex I subunit 4 family.

It localises to the mitochondrion membrane. The catalysed reaction is a ubiquinone + NADH + 5 H(+)(in) = a ubiquinol + NAD(+) + 4 H(+)(out). Core subunit of the mitochondrial membrane respiratory chain NADH dehydrogenase (Complex I) that is believed to belong to the minimal assembly required for catalysis. Complex I functions in the transfer of electrons from NADH to the respiratory chain. The immediate electron acceptor for the enzyme is believed to be ubiquinone. This chain is NADH-ubiquinone oxidoreductase chain 4 (MT-ND4), found in Squalus acanthias (Spiny dogfish).